The sequence spans 206 residues: Putative precorrin-2 dehydrogenase (206 aa).

NAD(+) contacts are provided by residues 20–21 and 41–46; these read SV and KEFDEE.

Belongs to the precorrin-2 dehydrogenase / sirohydrochlorin ferrochelatase family. In terms of assembly, homodimer.

It catalyses the reaction precorrin-2 + NAD(+) = sirohydrochlorin + NADH + 2 H(+). Its pathway is porphyrin-containing compound metabolism; siroheme biosynthesis; sirohydrochlorin from precorrin-2: step 1/1. Its function is as follows. Involved in the archaeal biosynthesis of heme. Catalyzes the oxiation of precorrin-2 into sirohydroclorin. The protein is Putative precorrin-2 dehydrogenase of Methanocaldococcus jannaschii (strain ATCC 43067 / DSM 2661 / JAL-1 / JCM 10045 / NBRC 100440) (Methanococcus jannaschii).